A 93-amino-acid polypeptide reads, in one-letter code: Pyrimidine/purine nucleoside phosphorylase (93 aa).

Belongs to the nucleoside phosphorylase PpnP family.

It carries out the reaction a purine D-ribonucleoside + phosphate = a purine nucleobase + alpha-D-ribose 1-phosphate. The enzyme catalyses adenosine + phosphate = alpha-D-ribose 1-phosphate + adenine. It catalyses the reaction cytidine + phosphate = cytosine + alpha-D-ribose 1-phosphate. The catalysed reaction is guanosine + phosphate = alpha-D-ribose 1-phosphate + guanine. It carries out the reaction inosine + phosphate = alpha-D-ribose 1-phosphate + hypoxanthine. The enzyme catalyses thymidine + phosphate = 2-deoxy-alpha-D-ribose 1-phosphate + thymine. It catalyses the reaction uridine + phosphate = alpha-D-ribose 1-phosphate + uracil. The catalysed reaction is xanthosine + phosphate = alpha-D-ribose 1-phosphate + xanthine. Catalyzes the phosphorolysis of diverse nucleosides, yielding D-ribose 1-phosphate and the respective free bases. Can use uridine, adenosine, guanosine, cytidine, thymidine, inosine and xanthosine as substrates. Also catalyzes the reverse reactions. The protein is Pyrimidine/purine nucleoside phosphorylase of Marinobacter nauticus (strain ATCC 700491 / DSM 11845 / VT8) (Marinobacter aquaeolei).